The sequence spans 315 residues: Ribosomal protein L11 methyltransferase (315 aa).

S-adenosyl-L-methionine is bound by residues Thr161, Gly182, Asp204, and Asn248.

The protein belongs to the methyltransferase superfamily. PrmA family.

The protein resides in the cytoplasm. The catalysed reaction is L-lysyl-[protein] + 3 S-adenosyl-L-methionine = N(6),N(6),N(6)-trimethyl-L-lysyl-[protein] + 3 S-adenosyl-L-homocysteine + 3 H(+). In terms of biological role, methylates ribosomal protein L11. This is Ribosomal protein L11 methyltransferase from Shouchella clausii (strain KSM-K16) (Alkalihalobacillus clausii).